Here is a 410-residue protein sequence, read N- to C-terminus: Exopolygalacturonase (410 aa).

Positions 1–22 are cleaved as a signal peptide; sequence MACIDNAMRALFLLALFCVVHG. 2 N-linked (GlcNAc...) asparagine glycosylation sites follow: N89 and N201. 5 PbH1 repeats span residues 192-218, 219-240, 242-262, 272-293, and 337-377; these read CKDM…HMGD, SSGV…SIGP, TSKV…SIGS, VTDI…RIKA, and ASKV…TMDD. The active-site Proton donor is the D233. A disulfide bridge links C235 with C252. An N-linked (GlcNAc...) asparagine glycan is attached at N246. H256 is a catalytic residue. A glycan (N-linked (GlcNAc...) asparagine) is linked at N349. A disulfide bridge links C364 with C370. N387 carries an N-linked (GlcNAc...) asparagine glycan. An intrachain disulfide couples C393 to C409.

This sequence belongs to the glycosyl hydrolase 28 family. As to expression, pollen.

Its subcellular location is the secreted. It is found in the cell wall. It carries out the reaction [(1-&gt;4)-alpha-D-galacturonosyl](n) + H2O = alpha-D-galacturonate + [(1-&gt;4)-alpha-D-galacturonosyl](n-1). Functionally, may function in depolymerizing pectin during pollen development, germination, and tube growth. Acts as an exo-polygalacturonase. The protein is Exopolygalacturonase (PG2C) of Zea mays (Maize).